The sequence spans 536 residues: T-complex protein 1 subunit delta (536 aa).

Positions 1–15 (MPEGKATSSASNTGK) are enriched in polar residues. A disordered region spans residues 1–26 (MPEGKATSSASNTGKNKGGAYQDRDK). Position 50 (Gly50) interacts with ADP. ATP is bound at residue Gly50. Residue Asp101 coordinates Mg(2+). ADP contacts are provided by Gly102, Thr103, Thr104, Ser105, Ser170, Lys171, Gly422, and Gln507. Gly102 and Thr103 together coordinate ATP. Position 171 (Lys171) interacts with ATP.

Belongs to the TCP-1 chaperonin family. Component of the chaperonin-containing T-complex (TRiC), a hexadecamer composed of two identical back-to-back stacked rings enclosing a protein folding chamber. Each ring is made up of eight different subunits: TCP1/CCT1, CCT2, CCT3, CCT4, CCT5, CCT6A/CCT6, CCT7, CCT8.

The protein resides in the cytoplasm. The enzyme catalyses ATP + H2O = ADP + phosphate + H(+). In terms of biological role, component of the chaperonin-containing T-complex (TRiC), a molecular chaperone complex that assists the folding of actin, tubulin and other proteins upon ATP hydrolysis. The sequence is that of T-complex protein 1 subunit delta (cct4) from Takifugu rubripes (Japanese pufferfish).